The chain runs to 490 residues: Membrane-bound lytic murein transglycosylase F (490 aa).

A signal peptide spans 1-32 (MFALTAYRLRCAAWLLATGIFLLLAGCSEAKA). Positions 33 to 269 (PTALERVQKE…RLKDRYYGHV (237 aa)) are non-LT domain. The segment at 270 to 490 (DVLGYVGAYT…PEEDSGDEKL (221 aa)) is LT domain. Residue Glu-316 is part of the active site. Positions 467 to 490 (AESGLHLPGVNKTRPEEDSGDEKL) are disordered. The span at 479–490 (TRPEEDSGDEKL) shows a compositional bias: basic and acidic residues.

The protein in the N-terminal section; belongs to the bacterial solute-binding protein 3 family. This sequence in the C-terminal section; belongs to the transglycosylase Slt family.

The protein localises to the cell outer membrane. The catalysed reaction is Exolytic cleavage of the (1-&gt;4)-beta-glycosidic linkage between N-acetylmuramic acid (MurNAc) and N-acetylglucosamine (GlcNAc) residues in peptidoglycan, from either the reducing or the non-reducing ends of the peptidoglycan chains, with concomitant formation of a 1,6-anhydrobond in the MurNAc residue.. Its function is as follows. Murein-degrading enzyme that degrades murein glycan strands and insoluble, high-molecular weight murein sacculi, with the concomitant formation of a 1,6-anhydromuramoyl product. Lytic transglycosylases (LTs) play an integral role in the metabolism of the peptidoglycan (PG) sacculus. Their lytic action creates space within the PG sacculus to allow for its expansion as well as for the insertion of various structures such as secretion systems and flagella. The polypeptide is Membrane-bound lytic murein transglycosylase F (Pseudomonas aeruginosa (strain ATCC 15692 / DSM 22644 / CIP 104116 / JCM 14847 / LMG 12228 / 1C / PRS 101 / PAO1)).